The chain runs to 278 residues: Leucine-rich repeat-containing protein 10 (278 aa).

LRR repeat units follow at residues 30–51, 52–74, 76–97, 98–121, 123–143, 144–166, 167–189, and 191–213; these read LDRM…VCSF, QELV…LGQL, NLQI…VCTL, KQLC…SLLQ, LRTL…VCEL, SLLK…LQRL, RELR…LLHM, and FLEI…HLSS. Residues 239 to 250 show a composition bias toward basic and acidic residues; that stretch reads RWAEETPEPDPR. The segment at 239-278 is disordered; it reads RWAEETPEPDPRKARRYALAREESQEAQLPALPPLPPTNS. Pro residues predominate over residues 269 to 278; that stretch reads ALPPLPPTNS.

The protein resides in the nucleus. In terms of biological role, may play important roles in cardiac development and/or cardiac function. The protein is Leucine-rich repeat-containing protein 10 (LRRC10) of Bos taurus (Bovine).